We begin with the raw amino-acid sequence, 294 residues long: Mitochondrial glycine transporter (294 aa).

3 Solcar repeats span residues 5–84 (RRAT…IRQA), 102–186 (LNMY…MKVL), and 208–292 (ASTL…IVKK). 6 helical membrane passes run 11 to 36 (LIGG…TRLQ), 59 to 85 (GALP…RQAI), 108 to 133 (MFSG…VRYE), 161 to 184 (GFGA…DRMK), 212 to 238 (INGS…KTRM), and 267 to 285 (GISL…AWGI).

This sequence belongs to the mitochondrial carrier (TC 2.A.29) family. SLC25A38 subfamily.

It localises to the mitochondrion inner membrane. The catalysed reaction is glycine(in) = glycine(out). In terms of biological role, mitochondrial glycine transporter that imports glycine into the mitochondrial matrix. Plays an important role in providing glycine for the first enzymatic step in heme biosynthesis, the condensation of glycine with succinyl-CoA to produce 5-aminolevulinate (ALA) in the mitochondrial matrix. This is Mitochondrial glycine transporter from Kluyveromyces lactis (strain ATCC 8585 / CBS 2359 / DSM 70799 / NBRC 1267 / NRRL Y-1140 / WM37) (Yeast).